The primary structure comprises 346 residues: MLVLGIESSCDETGLALYDTQRGLLAHALHSQIAMHREYGGVVPELASRDHIRRALPLLDEVMIQSGTHRDDIDAIAFTQGPGLAGALLVGASIANALALAWNKPTIGIHHLEGHLLSPLLVDAPPPFPFIALLVSGGHTQLMRVTDVGVYETLGETLDDAAGEAFDKTAKLIGLGYPGGPEVSRLAETGTPGAVVLPRPMLHSGDLDFSFSGLKTAVLTQMKKFEAAKLEGDALERAKADLARGFVDAAVDVLVAKSLAALKQTKLKRLVVAGGVGANRQLRAALSAAAAKRGFDVHYPDLALCTDNGAMIALAGALRLGRWPEQANTDYAFTVKPRWDLASLAR.

The Fe cation site is built by histidine 111 and histidine 115. Substrate contacts are provided by residues 134-138, aspartate 167, glycine 180, and asparagine 279; that span reads LVSGG. Aspartate 307 serves as a coordination point for Fe cation.

Belongs to the KAE1 / TsaD family. Fe(2+) serves as cofactor.

It localises to the cytoplasm. The catalysed reaction is L-threonylcarbamoyladenylate + adenosine(37) in tRNA = N(6)-L-threonylcarbamoyladenosine(37) in tRNA + AMP + H(+). In terms of biological role, required for the formation of a threonylcarbamoyl group on adenosine at position 37 (t(6)A37) in tRNAs that read codons beginning with adenine. Is involved in the transfer of the threonylcarbamoyl moiety of threonylcarbamoyl-AMP (TC-AMP) to the N6 group of A37, together with TsaE and TsaB. TsaD likely plays a direct catalytic role in this reaction. The sequence is that of tRNA N6-adenosine threonylcarbamoyltransferase from Burkholderia vietnamiensis (strain G4 / LMG 22486) (Burkholderia cepacia (strain R1808)).